Here is a 339-residue protein sequence, read N- to C-terminus: Erlin-2 (339 aa).

The Cytoplasmic portion of the chain corresponds to 1–3 (MAQ). Residues 4 to 24 (LGAVVAVASSFFCASLFSAVH) traverse the membrane as a helical segment. Over 25-339 (KIEEGHIGVY…EPLETATKDN (315 aa)) the chain is Extracellular. A glycan (N-linked (GlcNAc...) asparagine) is linked at Asn-106. The interaction with ERLIN1 stretch occupies residues 177 to 309 (EAIRRNYELM…DIPNMFMDSA (133 aa)). Lys-267 carries the N6-acetyllysine modification.

It belongs to the band 7/mec-2 family. In terms of assembly, forms a heteromeric complex with ERLIN1. In complex with ERLIN1, interacts with RNF170. Interacts with activated ITPR1, independently of the degree of ITPR1 polyubiquitination. Interacts with SCAP, INSIG1, SREBF1 and SREBF2 under cholesterol sufficiency conditions; indicative for an association with the SCAP-SREBP-INSIG complex. Probably part of an AMFR/gp78 and INSIG1-containing ubiquitin ligase complex involved in ERAD of HMGCR. Interacts with TMUB1; TMUB1 bridges the association with AMFR. Interacts with SYVN1 and RNF139. Interacts with TMEM259. Interacts with TMEM41B. Deubiquitinated by USP25; leading to stabilization.

It is found in the endoplasmic reticulum membrane. Functionally, component of the ERLIN1/ERLIN2 complex which mediates the endoplasmic reticulum-associated degradation (ERAD) of inositol 1,4,5-trisphosphate receptors (IP3Rs) such as ITPR1. Promotes sterol-accelerated ERAD of HMGCR probably implicating an AMFR/gp78-containing ubiquitin ligase complex. Involved in regulation of cellular cholesterol homeostasis by regulation the SREBP signaling pathway. May promote ER retention of the SCAP-SREBF complex. The protein is Erlin-2 of Rattus norvegicus (Rat).